The following is a 102-amino-acid chain: Mini zinc finger protein 1 (102 aa).

Residues 1 to 13 are compositionally biased toward basic residues; that stretch reads MMKKRQMVIKQRS. The disordered stretch occupies residues 1–34; it reads MMKKRQMVIKQRSRNSNTSSSWTTTSSSSSSSEI. Residues 14 to 32 show a composition bias toward low complexity; it reads RNSNTSSSWTTTSSSSSSS. The ZF-HD dimerization-type; degenerate zinc-finger motif lies at 39-88; that stretch reads YVECQKNHAANIGGYAVDGCREFMAAGVEGTVDALRCAACGCHRNFHRKE.

As to quaternary structure, homo- and heterodimers. Interacts with ZHD1, ZHD5, ZHD6, ZHD7, ZHD8, ZHD10 and ZHD13. In terms of tissue distribution, mostly expressed in roots and stems, present in siliques and seedlings, and weakly observed in petioles, leaves and flowers.

Its subcellular location is the cytoplasm. Its function is as follows. Inhibits zinc finger homeodomain (ZHD) transcription factors, such as ZHD5, by interacting with them to prevent both their nuclear localization and their DNA-binding properties. Involved in integrating signals from multiple hormones by preventing the expression of genes involved in gibberellic acid (GA), auxin and brassinosteroid signaling and by promoting the expression of abscisic acid (ABA)-responsive genes. Regulates several development aspects, including photomorphogenesis, apical dominance, longevity, flower morphology and fertility, as well as root and stem elongation. Promotes the formation of ectopic shoot meristems on leaf margins. The sequence is that of Mini zinc finger protein 1 (MIF1) from Arabidopsis thaliana (Mouse-ear cress).